A 92-amino-acid chain; its full sequence is Small ribosomal subunit protein uS19 (92 aa).

The protein belongs to the universal ribosomal protein uS19 family.

Protein S19 forms a complex with S13 that binds strongly to the 16S ribosomal RNA. In Dinoroseobacter shibae (strain DSM 16493 / NCIMB 14021 / DFL 12), this protein is Small ribosomal subunit protein uS19.